Here is a 279-residue protein sequence, read N- to C-terminus: Small ribosomal subunit protein uS3 (279 aa).

One can recognise a KH type-2 domain in the interval 17 to 86; that stretch reads VDEYFLEKLE…NPQIDVQEVK (70 aa). Low complexity-rich tracts occupy residues 206–233 and 241–252; these read AEKKSPAAGAEPAKEAAAVPAPAESTAA and ESEAAEAVTPEG. The interval 206–279 is disordered; that stretch reads AEKKSPAAGA…VVKTDGDSQS (74 aa).

Belongs to the universal ribosomal protein uS3 family. Part of the 30S ribosomal subunit.

In terms of biological role, binds the lower part of the 30S subunit head. In Methanocella arvoryzae (strain DSM 22066 / NBRC 105507 / MRE50), this protein is Small ribosomal subunit protein uS3.